Here is a 169-residue protein sequence, read N- to C-terminus: MAVKIKLQRVGKIRTPQYRVVVQDARARRGGAVIENLGIYQPANQPSIIDINSERAQYWIGVGAQPTDTALALLKLTGDWQKAKGLEGGENTVKPQPEKKSKLDIFNEALAEAAEGPTAEAITEKRRKAKEEAEAKAAAEAEAAEKAEAEAAEKAAAEAAEESEEASAE.

The disordered stretch occupies residues 114 to 169 (AEGPTAEAITEKRRKAKEEAEAKAAAEAEAAEKAEAEAAEKAAAEAAEESEEASAE). A compositionally biased stretch (basic and acidic residues) spans 129-156 (AKEEAEAKAAAEAEAAEKAEAEAAEKAA). Over residues 159–169 (AAEESEEASAE) the composition is skewed to acidic residues.

This sequence belongs to the bacterial ribosomal protein bS16 family.

This is Small ribosomal subunit protein bS16 from Corynebacterium urealyticum (strain ATCC 43042 / DSM 7109).